The sequence spans 457 residues: Argininosuccinate lyase (457 aa).

This sequence belongs to the lyase 1 family. Argininosuccinate lyase subfamily.

The protein localises to the cytoplasm. It carries out the reaction 2-(N(omega)-L-arginino)succinate = fumarate + L-arginine. It functions in the pathway amino-acid biosynthesis; L-arginine biosynthesis; L-arginine from L-ornithine and carbamoyl phosphate: step 3/3. The chain is Argininosuccinate lyase from Escherichia coli O9:H4 (strain HS).